Reading from the N-terminus, the 234-residue chain is Isoprenyl transferase (234 aa).

The active site involves aspartate 13. Aspartate 13 is a Mg(2+) binding site. Substrate is bound by residues 14-17 (GNGR), tryptophan 18, arginine 26, histidine 30, and 58-60 (STE). The active-site Proton acceptor is the asparagine 61. Substrate is bound by residues tryptophan 62, arginine 64, arginine 180, and 186-188 (RLS). Glutamate 199 provides a ligand contact to Mg(2+).

The protein belongs to the UPP synthase family. As to quaternary structure, homodimer. The cofactor is Mg(2+).

In terms of biological role, catalyzes the condensation of isopentenyl diphosphate (IPP) with allylic pyrophosphates generating different type of terpenoids. This is Isoprenyl transferase (uppS) from Helicobacter pylori (strain ATCC 700392 / 26695) (Campylobacter pylori).